Consider the following 77-residue polypeptide: Small ribosomal subunit protein bS18 (77 aa).

It belongs to the bacterial ribosomal protein bS18 family. As to quaternary structure, part of the 30S ribosomal subunit. Forms a tight heterodimer with protein bS6.

In terms of biological role, binds as a heterodimer with protein bS6 to the central domain of the 16S rRNA, where it helps stabilize the platform of the 30S subunit. This is Small ribosomal subunit protein bS18 from Bacillus thuringiensis subsp. konkukian (strain 97-27).